The following is a 416-amino-acid chain: Serine hydroxymethyltransferase (416 aa).

Residues L121 and 125-127 (GHL) each bind (6S)-5,6,7,8-tetrahydrofolate. K230 carries the N6-(pyridoxal phosphate)lysine modification. 354–356 (SPF) serves as a coordination point for (6S)-5,6,7,8-tetrahydrofolate.

Belongs to the SHMT family. Homodimer. Requires pyridoxal 5'-phosphate as cofactor.

It is found in the cytoplasm. The catalysed reaction is (6R)-5,10-methylene-5,6,7,8-tetrahydrofolate + glycine + H2O = (6S)-5,6,7,8-tetrahydrofolate + L-serine. It participates in one-carbon metabolism; tetrahydrofolate interconversion. Its pathway is amino-acid biosynthesis; glycine biosynthesis; glycine from L-serine: step 1/1. Catalyzes the reversible interconversion of serine and glycine with tetrahydrofolate (THF) serving as the one-carbon carrier. This reaction serves as the major source of one-carbon groups required for the biosynthesis of purines, thymidylate, methionine, and other important biomolecules. Also exhibits THF-independent aldolase activity toward beta-hydroxyamino acids, producing glycine and aldehydes, via a retro-aldol mechanism. The sequence is that of Serine hydroxymethyltransferase from Prochlorococcus marinus (strain MIT 9211).